The chain runs to 442 residues: tRNA-2-methylthio-N(6)-dimethylallyladenosine synthase (442 aa).

One can recognise an MTTase N-terminal domain in the interval 5–122 (KKVFIKTLGC…LPEMIKQKQK (118 aa)). The [4Fe-4S] cluster site is built by Cys14, Cys51, Cys85, Cys159, Cys163, and Cys166. In terms of domain architecture, Radical SAM core spans 145-378 (KAEGAKAYVS…DLLNSNAQII (234 aa)). Positions 380–442 (RQMVGTNQRI…LPNSLRGELI (63 aa)) constitute a TRAM domain.

Belongs to the methylthiotransferase family. MiaB subfamily. In terms of assembly, monomer. [4Fe-4S] cluster is required as a cofactor.

It is found in the cytoplasm. It carries out the reaction N(6)-dimethylallyladenosine(37) in tRNA + (sulfur carrier)-SH + AH2 + 2 S-adenosyl-L-methionine = 2-methylsulfanyl-N(6)-dimethylallyladenosine(37) in tRNA + (sulfur carrier)-H + 5'-deoxyadenosine + L-methionine + A + S-adenosyl-L-homocysteine + 2 H(+). In terms of biological role, catalyzes the methylthiolation of N6-(dimethylallyl)adenosine (i(6)A), leading to the formation of 2-methylthio-N6-(dimethylallyl)adenosine (ms(2)i(6)A) at position 37 in tRNAs that read codons beginning with uridine. The chain is tRNA-2-methylthio-N(6)-dimethylallyladenosine synthase from Francisella tularensis subsp. holarctica (strain FTNF002-00 / FTA).